The primary structure comprises 447 residues: Serine/threonine-protein kinase NLK2 (447 aa).

Residues 60–349 enclose the Protein kinase domain; the sequence is PEPDRPIGYG…AKDALAHPYL (290 aa). ATP contacts are provided by residues 66–74 and K89; that span reads IGYGAFGVV. Catalysis depends on D186, which acts as the Proton acceptor.

It belongs to the protein kinase superfamily. CMGC Ser/Thr protein kinase family. MAP kinase subfamily. As to quaternary structure, interacts with sox11, hmgxb4/hmg2l1, rnf138/narf, stat3.1 and mef2a. The cofactor is Mg(2+). As to expression, expressed widely in the ectoderm during early gastrula stage when neural induction is taking place. Expressed in the head region of neurula stage embryos. At the end of neurulation, expression becomes localized to the nervous system, and is restricted to the central nervous system, eye and head neural crest cells by the early tadpole stages.

The protein localises to the nucleus. It is found in the cytoplasm. It carries out the reaction L-seryl-[protein] + ATP = O-phospho-L-seryl-[protein] + ADP + H(+). The catalysed reaction is L-threonyl-[protein] + ATP = O-phospho-L-threonyl-[protein] + ADP + H(+). Its activity is regulated as follows. Activated by tyrosine and threonine phosphorylation. Functionally, negatively regulates Wnt/beta-catenin-signaling during development. Plays a role together with sox11 in neural induction during early embryogenesis. Involved in TGFbeta-mediated mesoderm induction in early embryos, acting downstream of map3k7/tak1 to phosphorylate stat3.1. Augments the rnf138/narf-directed ubiquitination and degradation of tcf/lef by enhancing the association of rnf138/narf and tcf/lef. Phosphorylates mef2a to play a role in anterior neural development, including eye formation. The protein is Serine/threonine-protein kinase NLK2 (nlk.2) of Xenopus laevis (African clawed frog).